Consider the following 128-residue polypeptide: Fluoride-specific ion channel FluC (128 aa).

4 consecutive transmembrane segments (helical) span residues 4 to 24 (LLLA…RYLI), 39 to 59 (GTLI…EFSM), 71 to 91 (FLTT…YETI), and 99 to 119 (MTLG…FVVI). Residues glycine 78 and threonine 81 each coordinate Na(+).

This sequence belongs to the fluoride channel Fluc/FEX (TC 1.A.43) family.

It localises to the cell membrane. It carries out the reaction fluoride(in) = fluoride(out). Na(+) is not transported, but it plays an essential structural role and its presence is essential for fluoride channel function. In terms of biological role, fluoride-specific ion channel. Important for reducing fluoride concentration in the cell, thus reducing its toxicity. In Clostridium perfringens (strain 13 / Type A), this protein is Fluoride-specific ion channel FluC.